Reading from the N-terminus, the 208-residue chain is Small ribosomal subunit protein uS5 (208 aa).

Positions 48-111 (LEDEVLDINM…DAAKLDITYI (64 aa)) constitute an S5 DRBM domain.

Belongs to the universal ribosomal protein uS5 family. In terms of assembly, part of the 30S ribosomal subunit. Contacts protein S4.

Functionally, with S4 and S12 plays an important role in translational accuracy. In Methanosarcina barkeri (strain Fusaro / DSM 804), this protein is Small ribosomal subunit protein uS5.